An 84-amino-acid chain; its full sequence is Cell division topological specificity factor (84 aa).

The protein belongs to the MinE family.

Functionally, prevents the cell division inhibition by proteins MinC and MinD at internal division sites while permitting inhibition at polar sites. This ensures cell division at the proper site by restricting the formation of a division septum at the midpoint of the long axis of the cell. The protein is Cell division topological specificity factor of Cupriavidus pinatubonensis (strain JMP 134 / LMG 1197) (Cupriavidus necator (strain JMP 134)).